The sequence spans 356 residues: Protein RecA (356 aa).

78 to 85 contacts ATP; that stretch reads GPESSGKT.

The protein belongs to the RecA family.

The protein localises to the cytoplasm. Functionally, can catalyze the hydrolysis of ATP in the presence of single-stranded DNA, the ATP-dependent uptake of single-stranded DNA by duplex DNA, and the ATP-dependent hybridization of homologous single-stranded DNAs. It interacts with LexA causing its activation and leading to its autocatalytic cleavage. The chain is Protein RecA from Paracoccus denitrificans.